The primary structure comprises 690 residues: MSANRTVTVFSSSAEDQEPIELAEDSLQNLDKMLAEEKEEHQLLKDEVVLLRKENVEAKTYSTLLEIMLDEAEEKASSAQETTSEENNLKILNRDLVAENLELKEMKEELRKIWLSDSKKFQEALTRISDENTKLQKDCHELESIRQCAQFALDNCNEELEKTQTENEEHESRIETLEREVCEKDIAMKDIVERKDEISLQLELQTKEFTSALNDLMYGREDTLKQIHQMKENWKVKQNEFEVEITKLKSQNDYFDSERLQLTDRIRALLNELSDVRLELGSTRLAMKEKAEVTEAVTSFNKDLRDKLEDEIARLGECLQFRKDEHEQDEAVIAHLEEQLKLGSDKAAAFSSEHSDTIELLRESETELMELRMENYDLKEDFKILKEEKEDVNRTCECLREQLSTTIQERDIEKGQMQSEMDAKMVAVHQQYAKQIDNMKYNHMLAINQELIKGQMALESGKKKHANEILTVRNELEQSNAAHQSLRDQCSLLLSSEDDLRTAHLALESKMTLVSEECIALRVSRANAQKEIGNLTEHHKLEVALLEDAKSGIQQRLHYATIEIEQLKKINEVTQAQFKKETDEKNAEINEFQAAMVSMKQQYNVLGNHCRVLTSQGISDRTTIDKLQETIREHTELAIETKRIHDAEIVQLNDAHKKLVDNLGVEELDEEPKASTESEEKAEWEMVDEE.

Coiled coils occupy residues 20–181 (IELA…EREV), 359–409 (ELLR…TIQE), 458–494 (LESGKKKHANEILTVRNELEQSNAAHQSLRDQCSLLL), and 560–643 (ATIE…ETKR). The LIR 1 signature appears at 61-64 (YSTL). The interval 381–385 (DFKIL) is required for interaction with lgg-1. The segment at 666–690 (EELDEEPKASTESEEKAEWEMVDEE) is disordered. The span at 671 to 684 (EPKASTESEEKAEW) shows a compositional bias: basic and acidic residues. Positions 684 to 687 (WEMV) match the LIR 2 motif.

As to quaternary structure, interacts with sepa-1. Interacts (via the LIR motifs) with lgg-1 and lgg-2. Shows strong interaction with lgg-1 and weak interaction with lgg-2.

The protein localises to the cytoplasm. Involved in autophagy. Thought to act as an adapter protein that brings PGL granules to autophagic structures containing lgg-1. Association with other adapters such as sepa-1 is required for the accumulation and degradation of germ cell specific P-granules by autophagy in somatic cells. This ensures exclusive localization of the P-granules in germ cells. May also play a role in the removal of sepa-1 from somatic cells. The sequence is that of Ectopic P granules protein 2 from Caenorhabditis elegans.